The chain runs to 153 residues: Putative pre-16S rRNA nuclease (153 aa).

It belongs to the YqgF nuclease family.

Its subcellular location is the cytoplasm. Its function is as follows. Could be a nuclease involved in processing of the 5'-end of pre-16S rRNA. The protein is Putative pre-16S rRNA nuclease of Chloroflexus aurantiacus (strain ATCC 29366 / DSM 635 / J-10-fl).